Reading from the N-terminus, the 71-residue chain is Small ribosomal subunit protein bS21 (71 aa).

It belongs to the bacterial ribosomal protein bS21 family.

The sequence is that of Small ribosomal subunit protein bS21 from Chromohalobacter salexigens (strain ATCC BAA-138 / DSM 3043 / CIP 106854 / NCIMB 13768 / 1H11).